The sequence spans 127 residues: uncharacterized protein (127 aa).

An N-terminal signal peptide occupies residues 1–16 (MLKKIIFGITISLTTG). Cysteine 17 carries the N-palmitoyl cysteine lipid modification. Cysteine 17 carries the S-diacylglycerol cysteine lipid modification. A coiled-coil region spans residues 56-101 (EVREEIQKYRVEIVDINKKKRELYNRLSKEAQSFLAEQQKYKQKLS). The disordered stretch occupies residues 102 to 127 (IPKLLIENDPKNNTANSKDNNDKDMK).

Its subcellular location is the cell membrane. This is an uncharacterized protein from Rickettsia prowazekii (strain Madrid E).